We begin with the raw amino-acid sequence, 169 residues long: 2-C-methyl-D-erythritol 2,4-cyclodiphosphate synthase (169 aa).

Residues Asp13 and His15 each coordinate a divalent metal cation. 4-CDP-2-C-methyl-D-erythritol 2-phosphate contacts are provided by residues 13–15 (DVH) and 39–40 (HS). His47 is a binding site for a divalent metal cation. 4-CDP-2-C-methyl-D-erythritol 2-phosphate contacts are provided by residues 61–63 (DIG), 66–70 (FPDTD), Phe144, and Arg147.

It belongs to the IspF family. As to quaternary structure, homotrimer. It depends on a divalent metal cation as a cofactor.

It catalyses the reaction 4-CDP-2-C-methyl-D-erythritol 2-phosphate = 2-C-methyl-D-erythritol 2,4-cyclic diphosphate + CMP. Its pathway is isoprenoid biosynthesis; isopentenyl diphosphate biosynthesis via DXP pathway; isopentenyl diphosphate from 1-deoxy-D-xylulose 5-phosphate: step 4/6. In terms of biological role, involved in the biosynthesis of isopentenyl diphosphate (IPP) and dimethylallyl diphosphate (DMAPP), two major building blocks of isoprenoid compounds. Catalyzes the conversion of 4-diphosphocytidyl-2-C-methyl-D-erythritol 2-phosphate (CDP-ME2P) to 2-C-methyl-D-erythritol 2,4-cyclodiphosphate (ME-CPP) with a corresponding release of cytidine 5-monophosphate (CMP). The sequence is that of 2-C-methyl-D-erythritol 2,4-cyclodiphosphate synthase from Cupriavidus pinatubonensis (strain JMP 134 / LMG 1197) (Cupriavidus necator (strain JMP 134)).